Reading from the N-terminus, the 179-residue chain is Large ribosomal subunit protein uL5 (179 aa).

Belongs to the universal ribosomal protein uL5 family. As to quaternary structure, part of the 50S ribosomal subunit; part of the 5S rRNA/L5/L18/L25 subcomplex. Contacts the 5S rRNA and the P site tRNA. Forms a bridge to the 30S subunit in the 70S ribosome.

Functionally, this is one of the proteins that bind and probably mediate the attachment of the 5S RNA into the large ribosomal subunit, where it forms part of the central protuberance. In the 70S ribosome it contacts protein S13 of the 30S subunit (bridge B1b), connecting the 2 subunits; this bridge is implicated in subunit movement. Contacts the P site tRNA; the 5S rRNA and some of its associated proteins might help stabilize positioning of ribosome-bound tRNAs. The sequence is that of Large ribosomal subunit protein uL5 from Pseudomonas fluorescens (strain SBW25).